The following is an 804-amino-acid chain: Phenylalanine--tRNA ligase beta subunit (804 aa).

A tRNA-binding domain is found at R38 to A148. Residues H401–P476 enclose the B5 domain. D454, D460, E463, and E464 together coordinate Mg(2+). Residues S710 to R803 enclose the FDX-ACB domain.

Belongs to the phenylalanyl-tRNA synthetase beta subunit family. Type 1 subfamily. Tetramer of two alpha and two beta subunits. The cofactor is Mg(2+).

The protein resides in the cytoplasm. It carries out the reaction tRNA(Phe) + L-phenylalanine + ATP = L-phenylalanyl-tRNA(Phe) + AMP + diphosphate + H(+). In Brucella abortus (strain 2308), this protein is Phenylalanine--tRNA ligase beta subunit.